Here is a 274-residue protein sequence, read N- to C-terminus: Large ribosomal subunit protein uL2 (274 aa).

A disordered region spans residues 224-256 (AMNPIDHPHGGGEGRTGEGRHAVDPWGNLTKGY). Over residues 229 to 246 (DHPHGGGEGRTGEGRHAV) the composition is skewed to basic and acidic residues.

The protein belongs to the universal ribosomal protein uL2 family. In terms of assembly, part of the 50S ribosomal subunit. Forms a bridge to the 30S subunit in the 70S ribosome.

Functionally, one of the primary rRNA binding proteins. Required for association of the 30S and 50S subunits to form the 70S ribosome, for tRNA binding and peptide bond formation. It has been suggested to have peptidyltransferase activity; this is somewhat controversial. Makes several contacts with the 16S rRNA in the 70S ribosome. The protein is Large ribosomal subunit protein uL2 of Acidovorax ebreus (strain TPSY) (Diaphorobacter sp. (strain TPSY)).